Reading from the N-terminus, the 1295-residue chain is Phosphoribosylformylglycinamidine synthase (1295 aa).

Residues 305–327 (WPGAATGSGGEIRDEGATGRGAK) form a disordered region. ATP contacts are provided by residues 307–318 (GAATGSGGEIRD) and alanine 678. 3 residues coordinate Mg(2+): glutamate 718, asparagine 722, and aspartate 884. Residue serine 886 coordinates ATP. Residues 1042–1295 (VAVLREQGVN…IFRNARKQLG (254 aa)) form the Glutamine amidotransferase type-1 domain. Catalysis depends on cysteine 1135, which acts as the Nucleophile. Residues histidine 1260 and glutamate 1262 contribute to the active site.

The protein in the N-terminal section; belongs to the FGAMS family. Monomer.

Its subcellular location is the cytoplasm. It catalyses the reaction N(2)-formyl-N(1)-(5-phospho-beta-D-ribosyl)glycinamide + L-glutamine + ATP + H2O = 2-formamido-N(1)-(5-O-phospho-beta-D-ribosyl)acetamidine + L-glutamate + ADP + phosphate + H(+). The protein operates within purine metabolism; IMP biosynthesis via de novo pathway; 5-amino-1-(5-phospho-D-ribosyl)imidazole from N(2)-formyl-N(1)-(5-phospho-D-ribosyl)glycinamide: step 1/2. Phosphoribosylformylglycinamidine synthase involved in the purines biosynthetic pathway. Catalyzes the ATP-dependent conversion of formylglycinamide ribonucleotide (FGAR) and glutamine to yield formylglycinamidine ribonucleotide (FGAM) and glutamate. The chain is Phosphoribosylformylglycinamidine synthase from Shigella sonnei (strain Ss046).